Consider the following 310-residue polypeptide: ADP-L-glycero-D-manno-heptose-6-epimerase (310 aa).

NADP(+)-binding positions include 10–11, 31–32, K38, K53, 75–79, and N92; these read FI, DN, and EGACS. Y140 serves as the catalytic Proton acceptor. K144 contributes to the NADP(+) binding site. A substrate-binding site is contributed by N169. NADP(+) is bound by residues V170 and K178. K178 serves as the catalytic Proton acceptor. Substrate-binding positions include S180, H187, 201–204, R209, and Y272; that span reads FEGS.

This sequence belongs to the NAD(P)-dependent epimerase/dehydratase family. HldD subfamily. As to quaternary structure, homopentamer. NADP(+) is required as a cofactor.

The catalysed reaction is ADP-D-glycero-beta-D-manno-heptose = ADP-L-glycero-beta-D-manno-heptose. It functions in the pathway nucleotide-sugar biosynthesis; ADP-L-glycero-beta-D-manno-heptose biosynthesis; ADP-L-glycero-beta-D-manno-heptose from D-glycero-beta-D-manno-heptose 7-phosphate: step 4/4. Its function is as follows. Catalyzes the interconversion between ADP-D-glycero-beta-D-manno-heptose and ADP-L-glycero-beta-D-manno-heptose via an epimerization at carbon 6 of the heptose. In Citrobacter koseri (strain ATCC BAA-895 / CDC 4225-83 / SGSC4696), this protein is ADP-L-glycero-D-manno-heptose-6-epimerase.